A 95-amino-acid chain; its full sequence is Non-specific lipid-transfer protein (95 aa).

3 disulfide bridges follow: Cys-4–Cys-52, Cys-14–Cys-29, and Cys-50–Cys-90.

Belongs to the plant LTP family. As to expression, seeds.

Its function is as follows. Plant non-specific lipid-transfer proteins transfer phospholipids as well as galactolipids across membranes. May play a role in wax or cutin deposition in the cell walls of expanding epidermal cells and certain secretory tissues. This is Non-specific lipid-transfer protein from Eleusine coracana (Indian finger millet).